We begin with the raw amino-acid sequence, 245 residues long: Aliphatic sulfonates import ATP-binding protein SsuB 2 (245 aa).

The 215-residue stretch at 15-229 (VAVRGLSRAF…DVADPEFARI (215 aa)) folds into the ABC transporter domain. Residue 47–54 (GASGCGKS) coordinates ATP.

Belongs to the ABC transporter superfamily. Aliphatic sulfonates importer (TC 3.A.1.17.2) family. As to quaternary structure, the complex is composed of two ATP-binding proteins (SsuB), two transmembrane proteins (SsuC) and a solute-binding protein (SsuA).

Its subcellular location is the cell inner membrane. It catalyses the reaction ATP + H2O + aliphatic sulfonate-[sulfonate-binding protein]Side 1 = ADP + phosphate + aliphatic sulfonateSide 2 + [sulfonate-binding protein]Side 1.. Part of the ABC transporter complex SsuABC involved in aliphatic sulfonates import. Responsible for energy coupling to the transport system. In Paracoccus denitrificans (strain Pd 1222), this protein is Aliphatic sulfonates import ATP-binding protein SsuB 2.